A 144-amino-acid chain; its full sequence is Galectin a (144 aa).

A Galectin domain is found at 1-138 (DHIDLEFDVG…DAVLRKLCVV (138 aa)).

Tetramer.

Lectin that binds beta-galactoside and a wide array of complex carbohydrates. This Aplysina lactuca (Marine sponge) protein is Galectin a.